A 317-amino-acid polypeptide reads, in one-letter code: UV DNA damage endonuclease (317 aa).

The protein belongs to the uve1/UvsE family.

Its function is as follows. Component in a DNA repair pathway. Removal of UV LIGHT damaged nucleotides. Recognizes pyrimidine dimers and cleave a phosphodiester bond immediately 5' to the lesion. In Bacillus anthracis (strain A0248), this protein is UV DNA damage endonuclease.